Consider the following 84-residue polypeptide: Toxin Aah4 (84 aa).

The first 19 residues, methionine 1–serine 19, serve as a signal peptide directing secretion. Residues arginine 21 to histidine 82 form the LCN-type CS-alpha/beta domain. 4 cysteine pairs are disulfide-bonded: cysteine 31–cysteine 81, cysteine 35–cysteine 53, cysteine 39–cysteine 63, and cysteine 43–cysteine 65. Residue arginine 84 is a propeptide, removed by a carboxypeptidase.

This sequence belongs to the long (4 C-C) scorpion toxin superfamily. Sodium channel inhibitor family. Alpha subfamily. As to expression, expressed by the venom gland.

It localises to the secreted. Its function is as follows. Alpha toxins bind voltage-independently at site-3 of sodium channels (Nav) and inhibit the inactivation of the activated channels, thereby blocking neuronal transmission. This toxin seems to specifically act on Nav1.6/SCN8A sodium channel. In vitro, it inhibits the proliferation of the prostate cancer cell line DU145 (IC(50)=15 uM). It shows low effect on the adhesion of DU145 cells to fibronectin (at 15 uM) and is inactive on DU145 cells migration. This is Toxin Aah4 from Androctonus australis (Sahara scorpion).